A 2454-amino-acid polypeptide reads, in one-letter code: Probable serine/threonine-protein kinase DDB_G0277071 (2454 aa).

A compositionally biased stretch (low complexity) spans 31–51; the sequence is TSSLTTTTTTTTTTTTTTSTT. Disordered regions lie at residues 31–57, 206–265, 340–612, 963–1051, 1201–1330, and 1342–1528; these read TSSL…HESN, QQQL…QKQN, PRPP…LKIE, NNIN…NENE, SSDD…SNPL, and ISKG…SNNT. A coiled-coil region spans residues 259 to 307; the sequence is KQQQKQNSQQQQQQQQQQQQQQQQQQQQQQQQQQQQQQQQQQQKLNIHE. Low complexity-rich tracts occupy residues 346-399 and 406-428; these read QQHQ…NITP and PSSV…KPTS. A compositionally biased stretch (polar residues) spans 429-444; it reads IGQIQSLHYHNPSLYQ. Composition is skewed to low complexity over residues 450–461 and 475–536; these read NRNRGNNNNNNN and SSTV…NTPN. Residues 553–568 show a composition bias toward gly residues; the sequence is GGIGGGGGGGSGGGGI. 5 stretches are compositionally biased toward low complexity: residues 963–1048, 1201–1248, 1275–1284, 1299–1324, and 1346–1403; these read NNIN…TTTN, SSDD…TGGP, NSSNNNNTSS, SGSS…PTTG, and SPAS…SVST. Positions 1417–1441 are enriched in polar residues; that stretch reads LNLSSVSKTGQASTSTPNLLNLKNI. Residues 1442–1478 are compositionally biased toward low complexity; that stretch reads PTTTNNSNSTTTTTTTTPTGKPQFSLNLSSLSKSSSS. A compositionally biased stretch (polar residues) spans 1479–1491; that stretch reads TETVPPSQPNQPI. Residues 1509-1528 show a composition bias toward low complexity; the sequence is STTTTTTTTTPPPINNSNNT. One can recognise a Protein kinase domain in the interval 1730–2034; sequence FKDLKRVAKG…TKFIAIKPTI (305 aa). Residues 1736–1744 and lysine 1760 contribute to the ATP site; that span reads VAKGAYGTV. Aspartate 1858 functions as the Proton acceptor in the catalytic mechanism. Positions 2130-2271 constitute a Tyrosine-protein phosphatase domain; that stretch reads RPSKVASFMY…LCRWGKQRRN (142 aa). Positions 2379–2404 are disordered; sequence NINNNNNNNSNNSKSKQQQQQQQNQN.

The protein belongs to the protein kinase superfamily. Ser/Thr protein kinase family.

It carries out the reaction L-seryl-[protein] + ATP = O-phospho-L-seryl-[protein] + ADP + H(+). It catalyses the reaction L-threonyl-[protein] + ATP = O-phospho-L-threonyl-[protein] + ADP + H(+). The chain is Probable serine/threonine-protein kinase DDB_G0277071 from Dictyostelium discoideum (Social amoeba).